The sequence spans 190 residues: MAAIKPITTYKGKIVPLFNDNIDTDQIIPKVHLKRISKSGFGPFAFDEWRYLPDGSDNPDFNPNKPQYKGASILITGDNFGCGSSREHAAWALKDYGFHIIIAGSFSDIFYMNCTKNAMLPIVLEKNAREHLAKYVEIEVDLPNQTVSSPDKSFHFEIDETWKNKLVNGLDDIAITLQYESLIEKYEKSL.

This sequence belongs to the LeuD family. LeuD type 1 subfamily. In terms of assembly, heterodimer of LeuC and LeuD.

It carries out the reaction (2R,3S)-3-isopropylmalate = (2S)-2-isopropylmalate. It functions in the pathway amino-acid biosynthesis; L-leucine biosynthesis; L-leucine from 3-methyl-2-oxobutanoate: step 2/4. Functionally, catalyzes the isomerization between 2-isopropylmalate and 3-isopropylmalate, via the formation of 2-isopropylmaleate. This Staphylococcus aureus (strain MRSA252) protein is 3-isopropylmalate dehydratase small subunit.